We begin with the raw amino-acid sequence, 278 residues long: Ankyrin repeat and SOCS box protein 13 (278 aa).

ANK repeat units follow at residues 18 to 47 (VERTPVHEAAQRGESLQLQQLIESGACVNQ), 51 to 80 (DSITPLHAASLQGQARCVQLLLAAGAQVDA), 84 to 113 (DGSTPLCDACASGSIECVKLLLSYGAKVNP), 116 to 145 (YTASPLHEACMSGSSECVRLLIDVGANLEA), 149 to 178 (HFGTPLHVACAREHLDCVKVLLNAGANVNA), and 181 to 210 (LHETALHHAAKVKNVDLIEMLIEFGGNIYA). One can recognise an SOCS box domain in the interval 229 to 278 (AKCFEYYEKTPLTLSQLCRVNLRKATGVRGLEKIAKLNIPPRLIDYLSYN).

The protein belongs to the ankyrin SOCS box (ASB) family.

It participates in protein modification; protein ubiquitination. Its function is as follows. May be a substrate-recognition component of a SCF-like ECS (Elongin-Cullin-SOCS-box protein) E3 ubiquitin-protein ligase complex which mediates the ubiquitination and subsequent proteasomal degradation of target proteins. This is Ankyrin repeat and SOCS box protein 13 (ASB13) from Homo sapiens (Human).